The primary structure comprises 270 residues: Tryptophan synthase alpha chain (270 aa).

Residues glutamate 49 and aspartate 60 each act as proton acceptor in the active site.

The protein belongs to the TrpA family. In terms of assembly, tetramer of two alpha and two beta chains.

The enzyme catalyses (1S,2R)-1-C-(indol-3-yl)glycerol 3-phosphate + L-serine = D-glyceraldehyde 3-phosphate + L-tryptophan + H2O. Its pathway is amino-acid biosynthesis; L-tryptophan biosynthesis; L-tryptophan from chorismate: step 5/5. The alpha subunit is responsible for the aldol cleavage of indoleglycerol phosphate to indole and glyceraldehyde 3-phosphate. The polypeptide is Tryptophan synthase alpha chain (Pseudomonas fluorescens (strain ATCC BAA-477 / NRRL B-23932 / Pf-5)).